The sequence spans 235 residues: Glucosamine-6-phosphate deaminase (235 aa).

The active-site Proton acceptor; for enolization step is the D62. N128 acts as the For ring-opening step in catalysis. The Proton acceptor; for ring-opening step role is filled by H130. E135 acts as the For ring-opening step in catalysis.

The protein belongs to the glucosamine/galactosamine-6-phosphate isomerase family. NagB subfamily.

It catalyses the reaction alpha-D-glucosamine 6-phosphate + H2O = beta-D-fructose 6-phosphate + NH4(+). Its pathway is amino-sugar metabolism; N-acetylneuraminate degradation; D-fructose 6-phosphate from N-acetylneuraminate: step 5/5. Catalyzes the reversible isomerization-deamination of glucosamine 6-phosphate (GlcN6P) to form fructose 6-phosphate (Fru6P) and ammonium ion. This chain is Glucosamine-6-phosphate deaminase, found in Streptococcus pneumoniae serotype 2 (strain D39 / NCTC 7466).